The primary structure comprises 728 residues: Phosphoribosylformylglycinamidine synthase subunit PurL (728 aa).

The active site involves histidine 42. ATP is bound by residues tyrosine 45 and lysine 84. Glutamate 86 is a binding site for Mg(2+). Residues 87–90 (SHNH) and arginine 109 contribute to the substrate site. Histidine 88 (proton acceptor) is an active-site residue. Aspartate 110 provides a ligand contact to Mg(2+). Glutamine 237 serves as a coordination point for substrate. Aspartate 265 contacts Mg(2+). 309–311 (ESQ) serves as a coordination point for substrate. 2 residues coordinate ATP: aspartate 491 and glycine 528. Asparagine 529 provides a ligand contact to Mg(2+). Residue serine 531 participates in substrate binding.

This sequence belongs to the FGAMS family. Monomer. Part of the FGAM synthase complex composed of 1 PurL, 1 PurQ and 2 PurS subunits.

The protein localises to the cytoplasm. It catalyses the reaction N(2)-formyl-N(1)-(5-phospho-beta-D-ribosyl)glycinamide + L-glutamine + ATP + H2O = 2-formamido-N(1)-(5-O-phospho-beta-D-ribosyl)acetamidine + L-glutamate + ADP + phosphate + H(+). Its pathway is purine metabolism; IMP biosynthesis via de novo pathway; 5-amino-1-(5-phospho-D-ribosyl)imidazole from N(2)-formyl-N(1)-(5-phospho-D-ribosyl)glycinamide: step 1/2. Part of the phosphoribosylformylglycinamidine synthase complex involved in the purines biosynthetic pathway. Catalyzes the ATP-dependent conversion of formylglycinamide ribonucleotide (FGAR) and glutamine to yield formylglycinamidine ribonucleotide (FGAM) and glutamate. The FGAM synthase complex is composed of three subunits. PurQ produces an ammonia molecule by converting glutamine to glutamate. PurL transfers the ammonia molecule to FGAR to form FGAM in an ATP-dependent manner. PurS interacts with PurQ and PurL and is thought to assist in the transfer of the ammonia molecule from PurQ to PurL. The sequence is that of Phosphoribosylformylglycinamidine synthase subunit PurL from Campylobacter jejuni subsp. jejuni serotype O:2 (strain ATCC 700819 / NCTC 11168).